The primary structure comprises 160 residues: Protein-export protein SecB (160 aa).

This sequence belongs to the SecB family. In terms of assembly, homotetramer, a dimer of dimers. One homotetramer interacts with 1 SecA dimer.

It is found in the cytoplasm. Functionally, one of the proteins required for the normal export of preproteins out of the cell cytoplasm. It is a molecular chaperone that binds to a subset of precursor proteins, maintaining them in a translocation-competent state. It also specifically binds to its receptor SecA. The protein is Protein-export protein SecB of Agrobacterium fabrum (strain C58 / ATCC 33970) (Agrobacterium tumefaciens (strain C58)).